The sequence spans 263 residues: Probable ABC transporter permease protein ycf63 (263 aa).

The next 6 helical transmembrane spans lie at 43–63, 82–102, 136–156, 159–179, 199–219, and 230–250; these read LVGPGSLNITLLTACFISMVF, AVIVIAFTRELSPVLTAVIIA, LVFPKVAACCIMLPILSTISL, SIAISIFVSFVMYGIPSSIFL, LCFGTIIAFISCQWGLTSSGG, and SVVTILLTIFITDFILSYFMF.

This sequence belongs to the MlaE permease family.

It is found in the plastid. It localises to the chloroplast membrane. Could be part of an ABC transporter complex. This is Probable ABC transporter permease protein ycf63 (ycf63) from Porphyra purpurea (Red seaweed).